We begin with the raw amino-acid sequence, 315 residues long: DNA-directed RNA polymerase subunit alpha (315 aa).

The alpha N-terminal domain (alpha-NTD) stretch occupies residues 1–229; it reads MLDSKLKAPV…EHLTYFSNPQ (229 aa). Residues 247–315 form an alpha C-terminal domain (alpha-CTD) region; sequence EQEEELDLPL…LEKKGFTLKE (69 aa).

Belongs to the RNA polymerase alpha chain family. As to quaternary structure, homodimer. The RNAP catalytic core consists of 2 alpha, 1 beta, 1 beta' and 1 omega subunit. When a sigma factor is associated with the core the holoenzyme is formed, which can initiate transcription.

It catalyses the reaction RNA(n) + a ribonucleoside 5'-triphosphate = RNA(n+1) + diphosphate. DNA-dependent RNA polymerase catalyzes the transcription of DNA into RNA using the four ribonucleoside triphosphates as substrates. The polypeptide is DNA-directed RNA polymerase subunit alpha (Thermus thermophilus (strain ATCC BAA-163 / DSM 7039 / HB27)).